Reading from the N-terminus, the 140-residue chain is T cell receptor alpha chain constant (140 aa).

Positions 19–107 (KSVCLFTDFD…LVEKSFETDT (89 aa)) constitute an Ig-like C1-type domain. Cysteines 22 and 72 form a disulfide. Residues N32, N66, N77, and N113 are each glycosylated (N-linked (GlcNAc...) asparagine). The interval 94–115 (CDVKLVEKSFETDTNLNFQNLS) is connecting peptide. The chain crosses the membrane as a helical span at residues 116–138 (VIGFRILLLKVAGFNLLMTLRLW). Residues 139-140 (SS) lie on the Cytoplasmic side of the membrane.

Alpha-beta TR is a heterodimer composed of an alpha and beta chain; disulfide-linked. The alpha-beta TR is associated with the transmembrane signaling CD3 coreceptor proteins to form the TR-CD3 (TcR or TCR). The assembly of alpha-beta TR heterodimers with CD3 occurs in the endoplasmic reticulum where a single alpha-beta TR heterodimer associates with one CD3D-CD3E heterodimer, one CD3G-CD3E heterodimer and one CD247 homodimer forming a stable octameric structure. CD3D-CD3E and CD3G-CD3E heterodimers preferentially associate with TR alpha and TR beta chains, respectively. The association of the CD247 homodimer is the last step of TcR assembly in the endoplasmic reticulum and is required for transport to the cell surface.

It localises to the cell membrane. Constant region of T cell receptor (TR) alpha chain. Alpha-beta T cell receptors are antigen specific receptors which are essential to the immune response and are present on the cell surface of T lymphocytes. Recognize peptide-major histocompatibility (MH) (pMH) complexes that are displayed by antigen presenting cells (APC), a prerequisite for efficient T cell adaptive immunity against pathogens. Binding of alpha-beta TR to pMH complex initiates TR-CD3 clustering on the cell surface and intracellular activation of LCK that phosphorylates the ITAM motifs of CD3G, CD3D, CD3E and CD247 enabling the recruitment of ZAP70. In turn, ZAP70 phosphorylates LAT, which recruits numerous signaling molecules to form the LAT signalosome. The LAT signalosome propagates signal branching to three major signaling pathways, the calcium, the mitogen-activated protein kinase (MAPK) kinase and the nuclear factor NF-kappa-B (NF-kB) pathways, leading to the mobilization of transcription factors that are critical for gene expression and essential for T cell growth and differentiation. The T cell repertoire is generated in the thymus, by V-(D)-J rearrangement. This repertoire is then shaped by intrathymic selection events to generate a peripheral T cell pool of self-MH restricted, non-autoaggressive T cells. Post-thymic interaction of alpha-beta TR with the pMH complexes shapes TR structural and functional avidity. This is T cell receptor alpha chain constant from Homo sapiens (Human).